A 120-amino-acid chain; its full sequence is MDILNYIKKNLKIRIETTNQLNDALKNKNLCSVEFDNKETWLSNTPLEEPNAYKNITHPSQLDGLENGDYHISSNLVVSILKEKLKEIEQLKQIIKSKDYDINYISAYGERKYPNGSKNE.

This is an uncharacterized protein from Dictyostelium discoideum (Social amoeba).